We begin with the raw amino-acid sequence, 493 residues long: Probable protein phosphatase 2C 40 (493 aa).

One can recognise a PPM-type phosphatase domain in the interval L145–L480. The Mn(2+) site is built by D180, G181, D408, and D471.

The protein belongs to the PP2C family. It depends on Mg(2+) as a cofactor. Requires Mn(2+) as cofactor.

It carries out the reaction O-phospho-L-seryl-[protein] + H2O = L-seryl-[protein] + phosphate. The catalysed reaction is O-phospho-L-threonyl-[protein] + H2O = L-threonyl-[protein] + phosphate. The protein is Probable protein phosphatase 2C 40 of Arabidopsis thaliana (Mouse-ear cress).